The primary structure comprises 188 residues: dTTP/UTP pyrophosphatase (188 aa).

Asp70 (proton acceptor) is an active-site residue.

It belongs to the Maf family. YhdE subfamily. A divalent metal cation is required as a cofactor.

It is found in the cytoplasm. The enzyme catalyses dTTP + H2O = dTMP + diphosphate + H(+). The catalysed reaction is UTP + H2O = UMP + diphosphate + H(+). Functionally, nucleoside triphosphate pyrophosphatase that hydrolyzes dTTP and UTP. May have a dual role in cell division arrest and in preventing the incorporation of modified nucleotides into cellular nucleic acids. The polypeptide is dTTP/UTP pyrophosphatase (Clostridium botulinum (strain Eklund 17B / Type B)).